The following is a 519-amino-acid chain: Polyamine aminopropyltransferase (519 aa).

Helical transmembrane passes span 17-37, 53-73, 86-106, 109-129, 158-178, 180-200, and 208-228; these read LLLV…LALV, LIVA…KPFL, LLGL…AVVG, LWML…ELPL, LGAL…LGMM, GAAA…CVLL, and QFIR…TVLV. Positions 200–463 are spermidine synthase; that stretch reads LRHLLPRAQF…FQLCGPEGTE (264 aa). One can recognise a PABS domain in the interval 225-459; that stretch reads TVLVRSDGIV…GDWGFQLCGP (235 aa). Glutamine 255 lines the S-methyl-5'-thioadenosine pocket. Aspartate 307 lines the spermidine pocket. S-methyl-5'-thioadenosine contacts are provided by residues glutamate 326 and 358–359; that span reads DA. Catalysis depends on aspartate 379, which acts as the Proton acceptor.

It belongs to the spermidine/spermine synthase family. In terms of assembly, homodimer or homotetramer.

Its subcellular location is the cell membrane. It carries out the reaction S-adenosyl 3-(methylsulfanyl)propylamine + putrescine = S-methyl-5'-thioadenosine + spermidine + H(+). The protein operates within amine and polyamine biosynthesis; spermidine biosynthesis; spermidine from putrescine: step 1/1. Its function is as follows. Catalyzes the irreversible transfer of a propylamine group from the amino donor S-adenosylmethioninamine (decarboxy-AdoMet) to putrescine (1,4-diaminobutane) to yield spermidine. The chain is Polyamine aminopropyltransferase from Corynebacterium efficiens (strain DSM 44549 / YS-314 / AJ 12310 / JCM 11189 / NBRC 100395).